A 1062-amino-acid polypeptide reads, in one-letter code: Cell division control protein 7 (1062 aa).

Residues 9-259 enclose the Protein kinase domain; it reads ITLGDCLGKG…TRKLLKHPWV (251 aa). ATP contacts are provided by residues 15–23 and lysine 38; that span reads LGKGAFGAV. The Proton acceptor role is filled by aspartate 131. Polar residues-rich tracts occupy residues 296-310 and 376-394; these read NRIN…QSSY and AFNS…SPLS. Disordered regions lie at residues 296 to 331, 361 to 394, and 1038 to 1062; these read NRIN…NWDN, NNSS…SPLS, and NEHK…PLTQ.

It belongs to the protein kinase superfamily. Ser/Thr protein kinase family. CDC7 subfamily. As to quaternary structure, interacts with spg1. Seems to interact with cdc11. Mg(2+) serves as cofactor.

The enzyme catalyses L-seryl-[protein] + ATP = O-phospho-L-seryl-[protein] + ADP + H(+). The catalysed reaction is L-threonyl-[protein] + ATP = O-phospho-L-threonyl-[protein] + ADP + H(+). Protein kinase essential for cell division. Plays a key role in initiation of septum formation and cytokinesis. The chain is Cell division control protein 7 (cdc7) from Schizosaccharomyces pombe (strain 972 / ATCC 24843) (Fission yeast).